The primary structure comprises 139 residues: Large ribosomal subunit protein uL16c (139 aa).

Residues 1–17 (MLSPKKTKFRKQHRGRM) show a composition bias toward basic residues. Residues 1-23 (MLSPKKTKFRKQHRGRMKGSASK) are disordered.

It belongs to the universal ribosomal protein uL16 family. Part of the 50S ribosomal subunit.

It localises to the plastid. The protein resides in the chloroplast. The protein is Large ribosomal subunit protein uL16c of Porphyra purpurea (Red seaweed).